Here is a 170-residue protein sequence, read N- to C-terminus: Photosystem II extrinsic protein V (170 aa).

The signal sequence occupies residues 1–33; the sequence is MASLFASLGRSLIKLLIVLPVIIGLSISSPAMA. Residues C70, C73, H74, and H125 each coordinate heme c.

It belongs to the cytochrome c family. PsbV subfamily. As to quaternary structure, PSII is composed of 1 copy each of membrane proteins PsbA, PsbB, PsbC, PsbD, PsbE, PsbF, PsbH, PsbI, PsbJ, PsbK, PsbL, PsbM, PsbT, PsbX, PsbY, Psb30/Ycf12, peripheral proteins PsbO, CyanoQ (PsbQ), PsbU, PsbV and a large number of cofactors. It forms dimeric complexes. The cofactor is heme c.

It localises to the cellular thylakoid membrane. Functionally, one of the extrinsic, lumenal subunits of photosystem II (PSII). PSII is a light-driven water plastoquinone oxidoreductase, using light energy to abstract electrons from H(2)O, generating a proton gradient subsequently used for ATP formation. The extrinsic proteins stabilize the structure of photosystem II oxygen-evolving complex (OEC), the ion environment of oxygen evolution and protect the OEC against heat-induced inactivation. Low-potential cytochrome c that plays a role in the OEC of PSII. In Prochlorococcus marinus (strain MIT 9303), this protein is Photosystem II extrinsic protein V.